A 288-amino-acid chain; its full sequence is Probable ketoamine kinase VV1_2562 (288 aa).

Residue 92–94 coordinates ATP; the sequence is NFL. Aspartate 195 functions as the Proton acceptor in the catalytic mechanism.

This sequence belongs to the fructosamine kinase family.

Functionally, ketoamine kinase that phosphorylates ketoamines on the third carbon of the sugar moiety to generate ketoamine 3-phosphate. This is Probable ketoamine kinase VV1_2562 from Vibrio vulnificus (strain CMCP6).